Here is a 135-residue protein sequence, read N- to C-terminus: Hemoglobin subunit beta-3 (135 aa).

One can recognise a Globin domain in the interval His2–Gln135. Heme b-binding residues include His57 and His81.

Belongs to the globin family. In terms of assembly, hb 3 is a heterotetramer of two alpha and two beta-3 chains. As to expression, red blood cells (at protein level).

Its function is as follows. Involved in oxygen transport from gills to the various peripheral tissues. This Somniosus microcephalus (Greenland sleeper shark) protein is Hemoglobin subunit beta-3.